Reading from the N-terminus, the 198-residue chain is TM2 domain-containing protein 2 (198 aa).

The first 27 residues, 1–27 (MRWPVPPLGYLLLGGQGLLLTFSLISS), serve as a signal peptide directing secretion. Residues 28–128 (QNNTSPVTYP…FLRGNRPCIK (101 aa)) are Extracellular-facing. Residues Asn-29, Asn-40, and Asn-76 are each glycosylated (N-linked (GlcNAc...) asparagine). The chain crosses the membrane as a helical span at residues 129 to 149 (YTGHYFITTLLYSFFLGCFGV). The TM2 domain occupies 131-179 (GHYFITTLLYSFFLGCFGVDRFCLGHTGTAVGKLLTWGGLGIWWFVDLI). At 150–166 (DRFCLGHTGTAVGKLLT) the chain is on the cytoplasmic side. A helical membrane pass occupies residues 167 to 187 (WGGLGIWWFVDLILLITGGLM). The Extracellular portion of the chain corresponds to 188–198 (PSDNSNWCTIY).

This sequence belongs to the TM2 family.

Its subcellular location is the membrane. The chain is TM2 domain-containing protein 2 (tm2d2) from Xenopus laevis (African clawed frog).